The sequence spans 410 residues: Ribosomal protein S6 kinase-related protein (410 aa).

The 168-residue stretch at 107–274 (LKILGLVAKG…GTLQYMAPEV (168 aa)) folds into the Protein kinase domain. ATP contacts are provided by residues 113-121 (VAKGSFGTV) and lysine 136. Aspartate 229 (proton acceptor) is an active-site residue.

This sequence belongs to the protein kinase superfamily. Ser/Thr protein kinase family.

It carries out the reaction L-seryl-[protein] + ATP = O-phospho-L-seryl-[protein] + ADP + H(+). The catalysed reaction is L-threonyl-[protein] + ATP = O-phospho-L-threonyl-[protein] + ADP + H(+). This Homo sapiens (Human) protein is Ribosomal protein S6 kinase-related protein.